We begin with the raw amino-acid sequence, 212 residues long: Nucleoside triphosphate pyrophosphatase (212 aa).

Catalysis depends on Asp79, which acts as the Proton acceptor.

This sequence belongs to the Maf family. The cofactor is a divalent metal cation.

Its subcellular location is the cytoplasm. The catalysed reaction is a ribonucleoside 5'-triphosphate + H2O = a ribonucleoside 5'-phosphate + diphosphate + H(+). It catalyses the reaction a 2'-deoxyribonucleoside 5'-triphosphate + H2O = a 2'-deoxyribonucleoside 5'-phosphate + diphosphate + H(+). Its function is as follows. Nucleoside triphosphate pyrophosphatase. May have a dual role in cell division arrest and in preventing the incorporation of modified nucleotides into cellular nucleic acids. The protein is Nucleoside triphosphate pyrophosphatase of Nocardia farcinica (strain IFM 10152).